A 396-amino-acid polypeptide reads, in one-letter code: Pyruvate synthase subunit PorA (396 aa).

Heterotetramer of one alpha, one beta, one delta and one gamma chain.

It carries out the reaction 2 oxidized [2Fe-2S]-[ferredoxin] + pyruvate + CoA = 2 reduced [2Fe-2S]-[ferredoxin] + acetyl-CoA + CO2 + H(+). The chain is Pyruvate synthase subunit PorA (porA) from Pyrococcus furiosus (strain ATCC 43587 / DSM 3638 / JCM 8422 / Vc1).